We begin with the raw amino-acid sequence, 323 residues long: Lipoyl synthase (323 aa).

Over residues 1–14 (MVTILDRTKPDDKR) the composition is skewed to basic and acidic residues. Positions 1–25 (MVTILDRTKPDDKRIRHPEKAHKPD) are disordered. [4Fe-4S] cluster-binding residues include Cys61, Cys66, Cys72, Cys87, Cys91, Cys94, and Ser300. The Radical SAM core domain maps to 73-289 (WEKKHATFMI…EDIAYTKGFL (217 aa)).

This sequence belongs to the radical SAM superfamily. Lipoyl synthase family. [4Fe-4S] cluster serves as cofactor.

It is found in the cytoplasm. It catalyses the reaction [[Fe-S] cluster scaffold protein carrying a second [4Fe-4S](2+) cluster] + N(6)-octanoyl-L-lysyl-[protein] + 2 oxidized [2Fe-2S]-[ferredoxin] + 2 S-adenosyl-L-methionine + 4 H(+) = [[Fe-S] cluster scaffold protein] + N(6)-[(R)-dihydrolipoyl]-L-lysyl-[protein] + 4 Fe(3+) + 2 hydrogen sulfide + 2 5'-deoxyadenosine + 2 L-methionine + 2 reduced [2Fe-2S]-[ferredoxin]. It functions in the pathway protein modification; protein lipoylation via endogenous pathway; protein N(6)-(lipoyl)lysine from octanoyl-[acyl-carrier-protein]: step 2/2. Functionally, catalyzes the radical-mediated insertion of two sulfur atoms into the C-6 and C-8 positions of the octanoyl moiety bound to the lipoyl domains of lipoate-dependent enzymes, thereby converting the octanoylated domains into lipoylated derivatives. In Allorhizobium ampelinum (strain ATCC BAA-846 / DSM 112012 / S4) (Agrobacterium vitis (strain S4)), this protein is Lipoyl synthase.